We begin with the raw amino-acid sequence, 340 residues long: Zinc finger protein 488 (340 aa).

An important for transcriptional repression activity region spans residues 72–187 (AELALLVAPG…SVFPAGESAD (116 aa)). The segment at 77–180 (LVAPGKPRPG…AERPELTSVF (104 aa)) is disordered. Positions 82 to 91 (KPRPGKPLPP) are enriched in pro residues. A compositionally biased stretch (basic and acidic residues) spans 106–125 (PRMKDRQVDAQAQEREHDDP). 2 consecutive C2H2-type zinc fingers follow at residues 275–302 (NWCAKCNLSFRLTSDLVFHMRSHHKKEH) and 317–339 (LACPVCQEHFRERHHLSRHMTSH). Residues 298 to 305 (HKKEHAGP) carry the Nuclear localization signal motif.

Belongs to the krueppel C2H2-type zinc-finger protein family. In terms of assembly, interacts with OLIG2.

The protein localises to the nucleus. Its function is as follows. Transcriptional repressor. Plays a role in oligodendrocyte differentiation, together with OLIG2. Mediates Notch signaling-activated formation of oligodendrocyte precursors. Promotes differentiation of adult neural stem progenitor cells (NSPCs) into mature oligodendrocytes and contributes to remyelination following nerve injury. In Homo sapiens (Human), this protein is Zinc finger protein 488 (ZNF488).